The sequence spans 874 residues: Alanine--tRNA ligase (874 aa).

Residues histidine 562, histidine 566, cysteine 665, and histidine 669 each coordinate Zn(2+).

It belongs to the class-II aminoacyl-tRNA synthetase family. The cofactor is Zn(2+).

It localises to the cytoplasm. It carries out the reaction tRNA(Ala) + L-alanine + ATP = L-alanyl-tRNA(Ala) + AMP + diphosphate. Functionally, catalyzes the attachment of alanine to tRNA(Ala) in a two-step reaction: alanine is first activated by ATP to form Ala-AMP and then transferred to the acceptor end of tRNA(Ala). Also edits incorrectly charged Ser-tRNA(Ala) and Gly-tRNA(Ala) via its editing domain. This chain is Alanine--tRNA ligase, found in Pseudomonas putida (strain ATCC 700007 / DSM 6899 / JCM 31910 / BCRC 17059 / LMG 24140 / F1).